Reading from the N-terminus, the 114-residue chain is Ribonuclease P protein component (114 aa).

Belongs to the RnpA family. In terms of assembly, consists of a catalytic RNA component (M1 or rnpB) and a protein subunit.

It catalyses the reaction Endonucleolytic cleavage of RNA, removing 5'-extranucleotides from tRNA precursor.. In terms of biological role, RNaseP catalyzes the removal of the 5'-leader sequence from pre-tRNA to produce the mature 5'-terminus. It can also cleave other RNA substrates such as 4.5S RNA. The protein component plays an auxiliary but essential role in vivo by binding to the 5'-leader sequence and broadening the substrate specificity of the ribozyme. This chain is Ribonuclease P protein component, found in Buchnera aphidicola subsp. Baizongia pistaciae (strain Bp).